The chain runs to 88 residues: Small ribosomal subunit protein eS21 (88 aa).

This sequence belongs to the eukaryotic ribosomal protein eS21 family. In terms of assembly, component of the small ribosomal subunit. Mature ribosomes consist of a small (40S) and a large (60S) subunit. The 40S subunit contains about 33 different proteins and 1 molecule of RNA (18S). The 60S subunit contains about 49 different proteins and 3 molecules of RNA (25S, 5.8S and 5S).

It localises to the cytoplasm. Its function is as follows. Required for the processing of the 20S rRNA-precursor to mature 18S rRNA in a late step of the maturation of 40S ribosomal subunits. Has a physiological role leading to 18S rRNA stability. In Aspergillus fumigatus (strain ATCC MYA-4609 / CBS 101355 / FGSC A1100 / Af293) (Neosartorya fumigata), this protein is Small ribosomal subunit protein eS21 (rps21).